Consider the following 218-residue polypeptide: Small ribosomal subunit protein uS3c (218 aa).

The KH type-2 domain maps to 47-118 (VQKNMRTSSG…KLNIAVTRIA (72 aa)).

It belongs to the universal ribosomal protein uS3 family. Part of the 30S ribosomal subunit.

The protein resides in the plastid. The protein localises to the chloroplast. This is Small ribosomal subunit protein uS3c (rps3) from Nicotiana sylvestris (Wood tobacco).